Here is a 254-residue protein sequence, read N- to C-terminus: Phosphoribosylaminoimidazole-succinocarboxamide synthase (254 aa).

Belongs to the SAICAR synthetase family.

The enzyme catalyses 5-amino-1-(5-phospho-D-ribosyl)imidazole-4-carboxylate + L-aspartate + ATP = (2S)-2-[5-amino-1-(5-phospho-beta-D-ribosyl)imidazole-4-carboxamido]succinate + ADP + phosphate + 2 H(+). It functions in the pathway purine metabolism; IMP biosynthesis via de novo pathway; 5-amino-1-(5-phospho-D-ribosyl)imidazole-4-carboxamide from 5-amino-1-(5-phospho-D-ribosyl)imidazole-4-carboxylate: step 1/2. The chain is Phosphoribosylaminoimidazole-succinocarboxamide synthase from Sinorhizobium medicae (strain WSM419) (Ensifer medicae).